The chain runs to 1042 residues: Signal-induced proliferation-associated protein 1 (1042 aa).

Disordered regions lie at residues 1–87 (MPMW…TSTR) and 132–153 (SQGM…EDQA). A Phosphothreonine modification is found at T64. S67 carries the phosphoserine modification. The span at 134–146 (GMGSHSEASSGTL) shows a compositional bias: polar residues. A phosphoserine mark is found at S182, S304, and S314. Residues 321 to 539 (LLTLDEQVLS…RTRQQYLQDL (219 aa)) form the Rap-GAP domain. The region spanning 687–763 (ELALPRDGQG…VCVTVLPPDE (77 aa)) is the PDZ domain. 3 positions are modified to phosphoserine: S817, S839, and S912. The tract at residues 830 to 903 (EFLHSQNSLS…PAPELRASFL (74 aa)) is disordered. The segment covering 832–845 (LHSQNSLSPRSSLS) has biased composition (low complexity). Residues 946–980 (LSREGQPIPESGDPKGTPKSDAEPEPGNLSEKVSH) form a disordered region. The span at 957–967 (GDPKGTPKSDA) shows a compositional bias: basic and acidic residues. The stretch at 972-1034 (GNLSEKVSHL…TRLLLASKQL (63 aa)) forms a coiled coil.

As to quaternary structure, interacts with RRP1B; the interaction leads to inhibition of SIPA1 GTPase activity. In terms of tissue distribution, expressed in fetal as well as in adult tissues. Expressed abundantly in the lymphoid tissues such as thymus, spleen and peripheral blood lymphocytes and also shows a significant expression in the spinal cord.

The protein resides in the nucleus. Its subcellular location is the cytoplasm. It localises to the perinuclear region. The protein localises to the endomembrane system. Functionally, GTPase activator for the nuclear Ras-related regulatory proteins Rap1 and Rap2 in vitro, converting them to the putatively inactive GDP-bound state. Affects cell cycle progression. The sequence is that of Signal-induced proliferation-associated protein 1 (SIPA1) from Homo sapiens (Human).